The following is a 1393-amino-acid chain: ABC transporter G family member 3 (1393 aa).

A compositionally biased stretch (basic and acidic residues) spans 1-14; the sequence is MEDKNNIELQEKAP. A disordered region spans residues 1-68; that stretch reads MEDKNNIELQ…IIYQNPTPAS (68 aa). A compositionally biased stretch (low complexity) spans 15–50; that stretch reads DNYNNNNNNNNNNNNNNNNNNNNNNNNNNNNNNDIN. In terms of domain architecture, ABC transporter 1 spans 100–353; sequence VSANNISYYI…YFSSIGLAPL (254 aa). Position 144 to 151 (144 to 151) interacts with ATP; sequence GIPGAGKS. Residues 473–698 enclose the ABC transmembrane type-2 1 domain; sequence MQYAVRFFQA…SYADGGYQGN (226 aa). 7 helical membrane-spanning segments follow: residues 479–499, 509–529, 558–578, 585–605, 615–635, 640–660, and 724–744; these read FFQA…MGFT, LVYF…EEFF, IPIS…IAGF, FIVF…IFQV, LASL…GYMI, IPGW…IDMV, and VDIV…FLGV. An ABC transporter 2 domain is found at 783–1035; the sequence is MTFQNLNYVV…VIQHFTSAGY (253 aa). Position 828–835 (828–835) interacts with ATP; sequence GPSGAGKS. The ABC transmembrane type-2 2 domain maps to 1121-1388; it reads QTILLRFLRS…FLGYLALRFI (268 aa). A run of 6 helical transmembrane segments spans residues 1122 to 1142, 1157 to 1177, 1206 to 1226, 1235 to 1255, 1265 to 1285, and 1364 to 1384; these read TILL…TLFL, LVFL…PTIV, LPMM…LTGL, FFFS…LATL, IAIL…GFFI, and FYNL…GYLA.

Belongs to the ABC transporter superfamily. ABCG family. PDR (TC 3.A.1.205) subfamily.

It is found in the membrane. The sequence is that of ABC transporter G family member 3 (abcG3) from Dictyostelium discoideum (Social amoeba).